Here is a 174-residue protein sequence, read N- to C-terminus: Gamma-crystallin A (174 aa).

Beta/gamma crystallin 'Greek key' domains follow at residues 2–40 and 41–83; these read GKIT…RVDS and GCWM…RIIP. Residues 84-87 are connecting peptide; it reads HTSS. 2 Beta/gamma crystallin 'Greek key' domains span residues 88–128 and 129–171; these read HKLR…HVLE and GCWV…RRVT.

Belongs to the beta/gamma-crystallin family. Monomer.

Crystallins are the dominant structural components of the vertebrate eye lens. The protein is Gamma-crystallin A (CRYGA) of Homo sapiens (Human).